Reading from the N-terminus, the 314-residue chain is MNMTATIQLKGKDFLTLADYSKEEIEYLLHLAVELKEKQQNGERYTPLSGKTLAMIFEKPSTRTRVSFEVGMVQLGGHALHLSSRDLQIGRGETIADTARVLSEYVDAIMIRTFEHEKVEELAHYATIPVINGLTDDDHPCQALADLLTIYEVKGKLQGLKLAYIGDGNNMAHALMLAAAKVGMHCAVASPKGYEPKEAVVKEAKQIANESGATIVVTNDPYEAIADADVVYTDVWASMGQEAEANERMHVFAPFQVNEALVQQAKQDFMFLHCLPAHRGEEVTEGVIDGVRSYIFQQAGNRLHAQKALLVSLL.

Residues 61-64 (STRT), Gln-88, Arg-112, and 139-142 (HPCQ) contribute to the carbamoyl phosphate site. L-ornithine-binding positions include Asn-170, Asp-234, and 238–239 (SM). Carbamoyl phosphate is bound by residues 274-275 (CL) and Arg-302.

This sequence belongs to the aspartate/ornithine carbamoyltransferase superfamily. OTCase family.

Its subcellular location is the cytoplasm. It catalyses the reaction carbamoyl phosphate + L-ornithine = L-citrulline + phosphate + H(+). The protein operates within amino-acid biosynthesis; L-arginine biosynthesis; L-arginine from L-ornithine and carbamoyl phosphate: step 1/3. Its function is as follows. Reversibly catalyzes the transfer of the carbamoyl group from carbamoyl phosphate (CP) to the N(epsilon) atom of ornithine (ORN) to produce L-citrulline. The polypeptide is Ornithine carbamoyltransferase (Anoxybacillus flavithermus (strain DSM 21510 / WK1)).